The chain runs to 91 residues: Large ribosomal subunit protein uL22 (91 aa).

This sequence belongs to the universal ribosomal protein uL22 family. In terms of assembly, part of the 50S ribosomal subunit.

Its function is as follows. This protein binds specifically to 23S rRNA; its binding is stimulated by other ribosomal proteins, e.g. L4, L17, and L20. It is important during the early stages of 50S assembly. It makes multiple contacts with different domains of the 23S rRNA in the assembled 50S subunit and ribosome. Functionally, the globular domain of the protein is located near the polypeptide exit tunnel on the outside of the subunit, while an extended beta-hairpin is found that lines the wall of the exit tunnel in the center of the 70S ribosome. The protein is Large ribosomal subunit protein uL22 (rplV) of Loofah witches'-broom phytoplasma.